The primary structure comprises 355 residues: Phenylalanine--tRNA ligase alpha subunit (355 aa).

Glu273 lines the Mg(2+) pocket.

Belongs to the class-II aminoacyl-tRNA synthetase family. Phe-tRNA synthetase alpha subunit type 1 subfamily. In terms of assembly, tetramer of two alpha and two beta subunits. Requires Mg(2+) as cofactor.

It is found in the cytoplasm. It carries out the reaction tRNA(Phe) + L-phenylalanine + ATP = L-phenylalanyl-tRNA(Phe) + AMP + diphosphate + H(+). The polypeptide is Phenylalanine--tRNA ligase alpha subunit (Bifidobacterium adolescentis (strain ATCC 15703 / DSM 20083 / NCTC 11814 / E194a)).